The sequence spans 533 residues: Na(+)/H(+) antiporter NhaB (533 aa).

The next 10 membrane-spanning stretches (helical) occupy residues 28–50 (FLII…VLVL), 67–87 (PGGL…SQVL), 96–116 (VLLL…LLLF), 131–165 (VSLM…FYSI), 254–274 (VPVL…GIFG), 316–336 (LIAG…SVII), 364–384 (LAVF…APVI), 396–416 (LVIF…VFVG), 454–474 (ATPN…APLI), and 481–501 (MVWM…MAIQ).

It belongs to the NhaB Na(+)/H(+) (TC 2.A.34) antiporter family.

Its subcellular location is the cell inner membrane. It catalyses the reaction 2 Na(+)(in) + 3 H(+)(out) = 2 Na(+)(out) + 3 H(+)(in). Its function is as follows. Na(+)/H(+) antiporter that extrudes sodium in exchange for external protons. This is Na(+)/H(+) antiporter NhaB from Shewanella baltica (strain OS195).